The primary structure comprises 373 residues: D-amino-acid oxidase 3 (373 aa).

The signal sequence occupies residues 1–19; the sequence is MVKYDAVILGSGVLGLSIA. The FAD site is built by Ser11, Leu14, Asp35, Ala46, Ser47, Gly51, and Asn53. Residue Phe57 coordinates anthranilate. Residue Asn180 is glycosylated (N-linked (GlcNAc...) asparagine). Cys214 and Cys271 form a disulfide bridge. Anthranilate-binding residues include Tyr229, Tyr246, and Arg296. Tyr229, Tyr246, and Arg296 together coordinate (R)-lactate. FAD contacts are provided by Arg296, Gly342, Gly345, Tyr346, and Gln347. The Microbody targeting signal signature appears at 371–373; sequence AKL.

Belongs to the DAMOX/DASOX family. It depends on FAD as a cofactor.

Its subcellular location is the peroxisome matrix. The enzyme catalyses a D-alpha-amino acid + O2 + H2O = a 2-oxocarboxylate + H2O2 + NH4(+). Catalyzes the oxidative deamination of D-amino acids with broad substrate specificity. Enables the organism to utilize D-amino acids as a source of nutrients. Enables the organism to utilize D-glutamate and D-methionine as a nitrogen source. Protects the organism from the toxicity of D-amino acids, including from D-glutamate. May play a role in its interaction with the host. The sequence is that of D-amino-acid oxidase 3 from Cryptococcus neoformans var. grubii serotype A (strain H99 / ATCC 208821 / CBS 10515 / FGSC 9487) (Filobasidiella neoformans var. grubii).